A 174-amino-acid chain; its full sequence is CDP-archaeol synthase (174 aa).

Helical transmembrane passes span 14–34 (ILEA…PVVA), 59–79 (IEGL…AALA), 83–103 (MLLA…DMAG), 118–138 (APLL…IALG), and 149–169 (AAAA…LLGL).

This sequence belongs to the CDP-archaeol synthase family. Requires Mg(2+) as cofactor.

It is found in the cell membrane. It catalyses the reaction 2,3-bis-O-(geranylgeranyl)-sn-glycerol 1-phosphate + CTP + H(+) = CDP-2,3-bis-O-(geranylgeranyl)-sn-glycerol + diphosphate. It participates in membrane lipid metabolism; glycerophospholipid metabolism. Its function is as follows. Catalyzes the formation of CDP-2,3-bis-(O-geranylgeranyl)-sn-glycerol (CDP-archaeol) from 2,3-bis-(O-geranylgeranyl)-sn-glycerol 1-phosphate (DGGGP) and CTP. This reaction is the third ether-bond-formation step in the biosynthesis of archaeal membrane lipids. This Aeropyrum pernix (strain ATCC 700893 / DSM 11879 / JCM 9820 / NBRC 100138 / K1) protein is CDP-archaeol synthase.